Consider the following 521-residue polypeptide: Tetratricopeptide repeat and J domain-containing co-chaperone DNJ1 (521 aa).

The first 21 residues, 1-21 (MHLNLAGLAVAATAFLATASA), serve as a signal peptide directing secretion. 7 TPR repeats span residues 33 to 66 (VSNLLTKAQTHLSRGETNEALVYYDAAIARDPTN), 67 to 100 (YLSLFKRATAYLSLGRTSQATEDFNKVLSLKPGF), 102 to 134 (GAHLQLARLRAKAGDWDAAKAQYGLAGKAPKSA), 176 to 209 (PHLRELRAHCRFELGDVELALSDLQHVLHMKPGD), 211 to 244 (SPHIVISATSFYALGDLENGIGQVKKCLQSDPDS), 315 to 348 (LENLIEMTCQAYTESSHKEAAKYCDESLQLNPDS), and 349 to 382 (FWGLLHKGKAQLKSELYDAAIATLEKAAEIRPDQ). The region spanning 404-473 (DYYKVLGVEN…ELRARFDRGD (70 aa)) is the J domain. The segment covering 464–474 (ELRARFDRGDD) has biased composition (basic and acidic residues). The tract at residues 464–521 (ELRARFDRGDDPNSQERPNPFQGQGNPFGGGHPFMFQQGGGGGGPNIKFQFGGQPFGF) is disordered. The span at 489–508 (NPFGGGHPFMFQQGGGGGGP) shows a compositional bias: gly residues. Low complexity predominate over residues 509–521 (NIKFQFGGQPFGF).

It is found in the endoplasmic reticulum lumen. In terms of biological role, endoplasmic reticulum co-chaperone required for the of virulence factors such as PG1, the major endopolygalacturonase produced during the infection of tomato plants. The sequence is that of Tetratricopeptide repeat and J domain-containing co-chaperone DNJ1 from Fusarium oxysporum f. sp. lycopersici (strain 4287 / CBS 123668 / FGSC 9935 / NRRL 34936) (Fusarium vascular wilt of tomato).